A 169-amino-acid polypeptide reads, in one-letter code: Putative ribonuclease VapC50 (169 aa).

Its function is as follows. Toxic component of a type II toxin-antitoxin (TA) system. An RNase. The cognate antitoxin is VapB50. The sequence is that of Putative ribonuclease VapC50 from Mycobacterium tuberculosis (strain ATCC 25618 / H37Rv).